A 148-amino-acid polypeptide reads, in one-letter code: uncharacterized protein (148 aa).

A compositionally biased stretch (basic and acidic residues) spans 97 to 112 (KKLDEQRMPGKPKNTE). A disordered region spans residues 97 to 126 (KKLDEQRMPGKPKNTEGSKSTIRKKANVGN).

This is an uncharacterized protein from Caenorhabditis elegans.